Here is a 345-residue protein sequence, read N- to C-terminus: Protein RecA (345 aa).

66–73 (GPESSGKT) lines the ATP pocket.

Belongs to the RecA family.

It localises to the cytoplasm. Its function is as follows. Can catalyze the hydrolysis of ATP in the presence of single-stranded DNA, the ATP-dependent uptake of single-stranded DNA by duplex DNA, and the ATP-dependent hybridization of homologous single-stranded DNAs. It interacts with LexA causing its activation and leading to its autocatalytic cleavage. This chain is Protein RecA, found in Acidithiobacillus ferrooxidans (strain ATCC 23270 / DSM 14882 / CIP 104768 / NCIMB 8455) (Ferrobacillus ferrooxidans (strain ATCC 23270)).